A 197-amino-acid polypeptide reads, in one-letter code: Recombination protein RecR (197 aa).

A C4-type zinc finger spans residues 56-71 (CKRCGSYAETEICNIC). The 96-residue stretch at 79 to 174 (HTFCVVEQPE…DVTRIAYGIT (96 aa)) folds into the Toprim domain.

It belongs to the RecR family.

Its function is as follows. May play a role in DNA repair. It seems to be involved in an RecBC-independent recombinational process of DNA repair. It may act with RecF and RecO. This chain is Recombination protein RecR, found in Leptospira borgpetersenii serovar Hardjo-bovis (strain JB197).